A 599-amino-acid chain; its full sequence is Sulfite reductase [NADPH] flavoprotein alpha-component (599 aa).

The region spanning 64–202 (ITIISASQTG…AASEWRARVV (139 aa)) is the Flavodoxin-like domain. FMN-binding positions include 70–75 (SQTGNA), 117–120 (STQG), and 153–162 (LGDSSYEFFC). The FAD-binding FR-type domain occupies 234 to 448 (DAPLVASLSV…IEHNDNFRLP (215 aa)). Residues Thr-322, Ala-356, 386 to 389 (RLYS), 404 to 406 (TVG), Tyr-410, and 419 to 422 (GGAS) each bind FAD. NADP(+) is bound by residues 519–520 (SR), 525–529 (KVYVQ), and Asp-561. Tyr-599 contributes to the FAD binding site.

This sequence belongs to the NADPH-dependent sulphite reductase flavoprotein subunit CysJ family. In the N-terminal section; belongs to the flavodoxin family. It in the C-terminal section; belongs to the flavoprotein pyridine nucleotide cytochrome reductase family. As to quaternary structure, alpha(8)-beta(8). The alpha component is a flavoprotein, the beta component is a hemoprotein. FAD serves as cofactor. The cofactor is FMN.

The enzyme catalyses hydrogen sulfide + 3 NADP(+) + 3 H2O = sulfite + 3 NADPH + 4 H(+). It participates in sulfur metabolism; hydrogen sulfide biosynthesis; hydrogen sulfide from sulfite (NADPH route): step 1/1. Functionally, component of the sulfite reductase complex that catalyzes the 6-electron reduction of sulfite to sulfide. This is one of several activities required for the biosynthesis of L-cysteine from sulfate. The flavoprotein component catalyzes the electron flow from NADPH -&gt; FAD -&gt; FMN to the hemoprotein component. The sequence is that of Sulfite reductase [NADPH] flavoprotein alpha-component from Shigella flexneri serotype 5b (strain 8401).